The chain runs to 253 residues: Imidazole glycerol phosphate synthase subunit HisF (253 aa).

Catalysis depends on residues Asp11 and Asp130.

The protein belongs to the HisA/HisF family. As to quaternary structure, heterodimer of HisH and HisF.

It localises to the cytoplasm. The enzyme catalyses 5-[(5-phospho-1-deoxy-D-ribulos-1-ylimino)methylamino]-1-(5-phospho-beta-D-ribosyl)imidazole-4-carboxamide + L-glutamine = D-erythro-1-(imidazol-4-yl)glycerol 3-phosphate + 5-amino-1-(5-phospho-beta-D-ribosyl)imidazole-4-carboxamide + L-glutamate + H(+). Its pathway is amino-acid biosynthesis; L-histidine biosynthesis; L-histidine from 5-phospho-alpha-D-ribose 1-diphosphate: step 5/9. Its function is as follows. IGPS catalyzes the conversion of PRFAR and glutamine to IGP, AICAR and glutamate. The HisF subunit catalyzes the cyclization activity that produces IGP and AICAR from PRFAR using the ammonia provided by the HisH subunit. In Clostridium botulinum (strain 657 / Type Ba4), this protein is Imidazole glycerol phosphate synthase subunit HisF.